The chain runs to 566 residues: Putative ABC transporter ATP-binding protein lp_0149 (566 aa).

2 consecutive ABC transporter domains span residues 6–247 and 302–536; these read ISFK…GLRE and LAIE…ASLA. ATP contacts are provided by residues 40 to 47 and 335 to 342; these read GPSGSGKS and GQNGTGKS.

Belongs to the ABC transporter superfamily.

The protein localises to the cell membrane. Probably part of an ABC transporter complex. Responsible for energy coupling to the transport system. The protein is Putative ABC transporter ATP-binding protein lp_0149 of Lactiplantibacillus plantarum (strain ATCC BAA-793 / NCIMB 8826 / WCFS1) (Lactobacillus plantarum).